Reading from the N-terminus, the 292-residue chain is MHEKYKKQLLILTGMSGAGKTVAAHSLEDVGYFVVDNLPPELLGNFWDLMNTSEDFEKVAVVIDLRVKSFYKDLIDEINSLEDSGQTQATIVFLEASDDTLVARYKETRRLPPLAENGRLLDGIRDERRILTPVRNRSNYILDTSKMTTKELKQKLQSKFGELHKPKFGIEVMSFGFKYGMPIDADIVMDVRFLPNPFYIPELRPFTGLDKRVFNYVMDKDETKVFYGKLLDLLLTAIPGYIDEGKEKLTIAIGCTGGQHRSVSIAQQLARDLSEKYPVDITHREISRYLRK.

14-21 (GMSGAGKT) contributes to the ATP binding site. 64-67 (DLRV) provides a ligand contact to GTP.

The protein belongs to the RapZ-like family.

Functionally, displays ATPase and GTPase activities. This chain is Nucleotide-binding protein Ldb0621, found in Lactobacillus delbrueckii subsp. bulgaricus (strain ATCC 11842 / DSM 20081 / BCRC 10696 / JCM 1002 / NBRC 13953 / NCIMB 11778 / NCTC 12712 / WDCM 00102 / Lb 14).